The primary structure comprises 255 residues: 1-(5-phosphoribosyl)-5-[(5-phosphoribosylamino)methylideneamino] imidazole-4-carboxamide isomerase (255 aa).

The active-site Proton acceptor is the aspartate 8. Aspartate 129 (proton donor) is an active-site residue.

Belongs to the HisA/HisF family.

The protein resides in the cytoplasm. It carries out the reaction 1-(5-phospho-beta-D-ribosyl)-5-[(5-phospho-beta-D-ribosylamino)methylideneamino]imidazole-4-carboxamide = 5-[(5-phospho-1-deoxy-D-ribulos-1-ylimino)methylamino]-1-(5-phospho-beta-D-ribosyl)imidazole-4-carboxamide. It functions in the pathway amino-acid biosynthesis; L-histidine biosynthesis; L-histidine from 5-phospho-alpha-D-ribose 1-diphosphate: step 4/9. The protein is 1-(5-phosphoribosyl)-5-[(5-phosphoribosylamino)methylideneamino] imidazole-4-carboxamide isomerase of Prochlorococcus marinus subsp. pastoris (strain CCMP1986 / NIES-2087 / MED4).